The sequence spans 308 residues: Acetyl-coenzyme A carboxylase carboxyl transferase subunit beta 1 (308 aa).

In terms of domain architecture, CoA carboxyltransferase N-terminal spans 25–294 (VWTKCTSCEQ…PLVVSVNESP (270 aa)). Residues Cys29, Cys32, Cys48, and Cys51 each coordinate Zn(2+). Residues 29 to 51 (CTSCEQVLYHAELERNLEVCPKC) form a C4-type zinc finger. Positions 288–308 (VSVNESPNEEPYSVPEVDEKG) are disordered.

This sequence belongs to the AccD/PCCB family. In terms of assembly, acetyl-CoA carboxylase is a heterohexamer composed of biotin carboxyl carrier protein (AccB), biotin carboxylase (AccC) and two subunits each of ACCase subunit alpha (AccA) and ACCase subunit beta (AccD). The cofactor is Zn(2+).

The protein resides in the cytoplasm. It catalyses the reaction N(6)-carboxybiotinyl-L-lysyl-[protein] + acetyl-CoA = N(6)-biotinyl-L-lysyl-[protein] + malonyl-CoA. It participates in lipid metabolism; malonyl-CoA biosynthesis; malonyl-CoA from acetyl-CoA: step 1/1. Functionally, component of the acetyl coenzyme A carboxylase (ACC) complex. Biotin carboxylase (BC) catalyzes the carboxylation of biotin on its carrier protein (BCCP) and then the CO(2) group is transferred by the transcarboxylase to acetyl-CoA to form malonyl-CoA. The protein is Acetyl-coenzyme A carboxylase carboxyl transferase subunit beta 1 of Vibrio parahaemolyticus serotype O3:K6 (strain RIMD 2210633).